The following is a 146-amino-acid chain: Snaclec rhodocytin subunit beta (146 aa).

A signal peptide spans 1–23 (MGRFIFVSFGLLVVFLSLSGTGA). Disulfide bonds link Cys25-Cys36, Cys53-Cys142, and Cys119-Cys134. Residues 32-143 (YEGHCYKPFN…CSSTCSFVCK (112 aa)) enclose the C-type lectin domain.

It belongs to the snaclec family. As to quaternary structure, dimer (non-covalently linked) of heterodimers of subunits alpha and beta (disulfide-linked). Expressed by the venom gland.

It is found in the secreted. Its function is as follows. Elicits platelet aggregation by the binding to the C-type lectin domain family 1 member B (CLEC1B/CLEC2). Binding leads to tyrosine phosphorylation in the cytoplasmic tail of CLEC1B, which promotes the binding of spleen tyrosine kinase (Syk), subsequent activation of PLCgamma2, and platelet activation and aggregation. Binding to GPIbalpha (GP1BA) and alpha2/beta-1 (ITGA2/ITGB1) may also induce aggregation, but this is controversial. The polypeptide is Snaclec rhodocytin subunit beta (Calloselasma rhodostoma (Malayan pit viper)).